We begin with the raw amino-acid sequence, 471 residues long: P2X purinoceptor 2 (471 aa).

Residues 1 to 42 (MAAAQPKYPAGATARRLARGCWSALWDYETPKVIVVRNRRLG) are Cytoplasmic-facing. Cystine bridges form between C21–C439, C125–C176, C136–C159, C142–C170, C226–C236, and C270–C279. The helical transmembrane segment at 43-63 (VLYRAVQLLILLYFVWYVFIV) threads the bilayer. The Extracellular portion of the chain corresponds to 64-337 (QKSYQESETG…IVHGQAGKFS (274 aa)). Residues K81 and K83 each coordinate ATP. The N-linked (GlcNAc...) asparagine glycan is linked to N133. N194 carries an N-linked (GlcNAc...) asparagine glycan. Position 196 (T196) interacts with ATP. The ATP site is built by S296, N300, and R302. N-linked (GlcNAc...) asparagine glycosylation is present at N310. K319 is an ATP binding site. Residues 320–333 (AYGIRIDVIVHGQA) are pore-forming motif. Residues 338-358 (LIPTIINLATALTSVGVGSFL) traverse the membrane as a helical segment. At 359–471 (CDWILLTFMN…PTDPKGLAQL (113 aa)) the chain is on the cytoplasmic side. The disordered stretch occupies residues 400 to 471 (GQAPPEPGHR…PTDPKGLAQL (72 aa)).

This sequence belongs to the P2X receptor family. Homotrimer and heterotrimer; functional P2XRs are organized as homomeric and heteromeric trimers. Homotrimer. Forms heterotrimer with P2RX1. Forms heterotrimer with P2RX6. Forms heterotrimer with P2RX3. In terms of tissue distribution, expressed in both the central and peripheral nervous system, as well as in the pituitary gland.

The protein resides in the cell membrane. The enzyme catalyses Ca(2+)(in) = Ca(2+)(out). It carries out the reaction K(+)(in) = K(+)(out). It catalyses the reaction Na(+)(in) = Na(+)(out). Its activity is regulated as follows. Fast activation by external ATP. Exhibits slow desensitization during prolonged ATP activation. Not sensitive to the ATP agonist:alpha/beta-methylene-ATP. Its function is as follows. ATP-gated nonselective transmembrane cation channel permeable to potassium, sodium and calcium. Activation by extracellular ATP induces a variety of cellular responses, such as excitatory postsynaptic responses in sensory neurons, neuromuscular junctions (NMJ) formation, hearing, perception of taste and peristalsis. In the inner ear, regulates sound transduction and auditory neurotransmission, outer hair cell electromotility, inner ear gap junctions, and K(+) recycling. Mediates synaptic transmission between neurons and from neurons to smooth muscle. The sequence is that of P2X purinoceptor 2 from Homo sapiens (Human).